The primary structure comprises 255 residues: Diphthine synthase (255 aa).

S-adenosyl-L-methionine is bound by residues Leu-9, Asp-85, Val-88, 113–114, Leu-164, Ala-207, and His-232; that span reads SI.

This sequence belongs to the diphthine synthase family. In terms of assembly, homodimer.

The enzyme catalyses 2-[(3S)-amino-3-carboxypropyl]-L-histidyl-[translation elongation factor 2] + 3 S-adenosyl-L-methionine = diphthine-[translation elongation factor 2] + 3 S-adenosyl-L-homocysteine + 3 H(+). The protein operates within protein modification; peptidyl-diphthamide biosynthesis. Functionally, S-adenosyl-L-methionine-dependent methyltransferase that catalyzes the trimethylation of the amino group of the modified target histidine residue in translation elongation factor 2 (EF-2), to form an intermediate called diphthine. The three successive methylation reactions represent the second step of diphthamide biosynthesis. This is Diphthine synthase from Methanococcus maripaludis (strain C7 / ATCC BAA-1331).